A 195-amino-acid chain; its full sequence is Acireductone dioxygenase 2 (195 aa).

4 residues coordinate Fe(2+): H94, H96, E100, and H139. Residues H94, H96, E100, and H139 each coordinate Ni(2+).

It belongs to the acireductone dioxygenase (ARD) family. Fe(2+) is required as a cofactor. Requires Ni(2+) as cofactor.

The protein resides in the cytoplasm. It localises to the nucleus. It catalyses the reaction 1,2-dihydroxy-5-(methylsulfanyl)pent-1-en-3-one + O2 = 4-methylsulfanyl-2-oxobutanoate + formate + 2 H(+). The enzyme catalyses 1,2-dihydroxy-5-(methylsulfanyl)pent-1-en-3-one + O2 = 3-(methylsulfanyl)propanoate + CO + formate + 2 H(+). Its pathway is amino-acid biosynthesis; L-methionine biosynthesis via salvage pathway; L-methionine from S-methyl-5-thio-alpha-D-ribose 1-phosphate: step 5/6. Catalyzes 2 different reactions between oxygen and the acireductone 1,2-dihydroxy-3-keto-5-methylthiopentene (DHK-MTPene) depending upon the metal bound in the active site. Fe-containing acireductone dioxygenase (Fe-ARD) produces formate and 2-keto-4-methylthiobutyrate (KMTB), the alpha-ketoacid precursor of methionine in the methionine recycle pathway. Ni-containing acireductone dioxygenase (Ni-ARD) produces methylthiopropionate, carbon monoxide and formate, and does not lie on the methionine recycle pathway. The sequence is that of Acireductone dioxygenase 2 from Physcomitrium patens (Spreading-leaved earth moss).